Consider the following 586-residue polypeptide: MVVGKIIKISGPVVVAEGMKGSQMYEVVKVGNEGLTGEIIQLTENEAIIQVYEETAGIKPGEGVTGTGAPLSVELGPGMLKAMYDGIQRPLNAIEDATNSIYIPRGVNVPSLPRDVKWDFVPSVNVGDEVLAGDIIGTVQETASIVHKILIPVGINGKIKEIKSGSFTVEETVAVVETEKGDKLVTMMQKWPVRKPRPSKVKLPPVIPLLTGQRVEDTFFGLAKGGASAIPGPFGSGKTVTQHQLAKWSDVDVVVYIGCGERGNEMTEVIEEFPHLDDIKTGNKLMDRTVLIANTSNMPVAAREASVYTGITIAEYFRDQGLGVLLTADSTSRWAEAMREISGRLEEMPGEEGYPAYLSSKLAQFYERAGRVDCLGSEDRQGFVCIVGAVSPPGGDFSEPVTSNTLRIVKVFWALDANLARRRHFPAINWLTSYSLYINDIAGWWKKNTGEDWRVLRDEAMGLLQKEAELQEIVQLVGPDALPDRERVILEIARILREDFLQQDAYHEVDSYCSPKKQYNMLKVIMTFYKKALDAVAKGADPAKLSAVSVKGDIARMKYMPEEEFIKTKVPEMIKKMESELGALIK.

232–239 (GPFGSGKT) is an ATP binding site.

The protein belongs to the ATPase alpha/beta chains family. In terms of assembly, has multiple subunits with at least A(3), B(3), C, D, E, F, H, I and proteolipid K(x).

Its subcellular location is the cell membrane. It catalyses the reaction ATP + H2O + 4 H(+)(in) = ADP + phosphate + 5 H(+)(out). Component of the A-type ATP synthase that produces ATP from ADP in the presence of a proton gradient across the membrane. The A chain is the catalytic subunit. The sequence is that of A-type ATP synthase subunit A from Methanococcus vannielii (strain ATCC 35089 / DSM 1224 / JCM 13029 / OCM 148 / SB).